The sequence spans 458 residues: BUD13 homolog (458 aa).

Disordered regions lie at residues 16 to 37 (SGDI…SGLR), 81 to 328 (KQTF…TEEL), and 437 to 458 (AKTE…AEYE). Over residues 138-148 (NRHDSDKDNSP) the composition is skewed to basic and acidic residues. Composition is skewed to basic residues over residues 175 to 185 (RNRRSPPRTRR) and 208 to 218 (PRRRPSSPARR). 3 stretches are compositionally biased toward basic and acidic residues: residues 219–243 (RKDD…KKEE), 266–284 (RDLK…KMFE), and 314–328 (DQAK…TEEL). The stretch at 262-356 (LQSARDLKEE…AQLEEMARVA (95 aa)) forms a coiled coil.

Belongs to the CWC26 family.

This chain is BUD13 homolog, found in Caenorhabditis elegans.